A 374-amino-acid polypeptide reads, in one-letter code: Multicilin (374 aa).

Disordered regions lie at residues 18 to 72 (CPNR…ALPA) and 84 to 105 (CSSFLGSDPPPGGDSAASQSHS). Residues 168 to 216 (EQYWKEVADQNQRALGDALIENNQLHATLTQKQEEIASLKERNLQLKEL) adopt a coiled-coil conformation. Positions 284 to 306 (LQSRDPKRLRLQPEPQSLDRRPG) are disordered.

Belongs to the geminin family. As to quaternary structure, heterodimer (via coiled-coil domain) with GMNN (via coiled-coil domain); targets GMNN to the nucleus. Can form homodimers (in vitro, via coiled-coil domain), but these are much less stable than the heterodimer formed with GMNN.

It localises to the nucleus. In terms of biological role, transcription regulator specifically required for multiciliate cell differentiation. Acts in a multiprotein complex containing E2F4 and E2F5 that binds and activates genes required for centriole biogenesis. Required for the deuterosome-mediated acentriolar pathway. Plays a role in mitotic cell cycle progression by promoting cell cycle exit. Modulates GMNN activity by reducing its affinity for CDT1. In Bos taurus (Bovine), this protein is Multicilin (MCIDAS).